Consider the following 818-residue polypeptide: Dipeptidyl-peptidase 7 (818 aa).

A signal peptide spans 1–22 (MKLKRILLSVALLCGIGTTAMA). Residues histidine 87, aspartate 223, and serine 645 each act as charge relay system in the active site.

The protein belongs to the peptidase S46 family.

In terms of biological role, catalyzes the removal of dipeptides from the N-terminus of oligopeptides. Most efficiently cleaves the synthetic substrate Met-Leu-methylcoumaryl-7-amide (Met-Leu-MCA), and slowly hydrolyzes Leu-Gln-, Lys-Ala-, Leu-Arg, and Ala-Asn-MCA. Is likely involved in amino acid metabolism and bacterial growth/survival of asaccharolytic P.endodontalis, that utilizes amino acids from extracellular proteinaceous nutrients as energy and carbon sources. In Porphyromonas endodontalis (strain ATCC 35406 / DSM 24491 / JCM 8526 / CCUG 16442 / BCRC 14492 / NCTC 13058 / HG 370) (Bacteroides endodontalis), this protein is Dipeptidyl-peptidase 7.